A 253-amino-acid polypeptide reads, in one-letter code: NAD-dependent protein deacetylase (253 aa).

The region spanning Ala-3–Asn-253 is the Deacetylase sirtuin-type domain. Residues Ala-29, Thr-33, Phe-40, Arg-41, Gln-106, Ile-108, Asp-109, and His-126 each coordinate NAD(+). Phe-40 serves as a coordination point for nicotinamide. Nicotinamide is bound by residues Ile-108 and Asp-109. The active-site Proton acceptor is the His-126. Residues Cys-134, Cys-137, Cys-159, and Cys-162 each coordinate Zn(2+). NAD(+) contacts are provided by Ser-200, Ser-201, Asn-225, Asp-242, and Ile-243.

The protein belongs to the sirtuin family. Class U subfamily. Zn(2+) serves as cofactor.

It is found in the cytoplasm. The enzyme catalyses N(6)-acetyl-L-lysyl-[protein] + NAD(+) + H2O = 2''-O-acetyl-ADP-D-ribose + nicotinamide + L-lysyl-[protein]. NAD-dependent protein deacetylase which modulates the activities of several enzymes which are inactive in their acetylated form. The polypeptide is NAD-dependent protein deacetylase (Rhodopseudomonas palustris (strain ATCC BAA-98 / CGA009)).